A 459-amino-acid polypeptide reads, in one-letter code: uncharacterized protein (459 aa).

The TRAM domain maps to 6 to 64 (KNKQEKNIIITIKRLGINGEGIGYYKKKIIFIPGALPNEVVVAKIVDRHPHYLEGELVR). The S-adenosyl-L-methionine site is built by Gln289, Tyr318, Glu339, and Asp387. The active-site Nucleophile is the Cys414.

The protein belongs to the class I-like SAM-binding methyltransferase superfamily. RNA M5U methyltransferase family.

This is an uncharacterized protein from Lactobacillus johnsonii (strain CNCM I-12250 / La1 / NCC 533).